The following is a 69-amino-acid chain: Protein translocase subunit SecE (69 aa).

The helical transmembrane segment at 43–63 (VAGAGILVIGFVGFLIYVLLT) threads the bilayer.

This sequence belongs to the SecE/SEC61-gamma family. As to quaternary structure, component of the Sec protein translocase complex. Heterotrimer consisting of SecY (alpha), SecG (beta) and SecE (gamma) subunits. The heterotrimers can form oligomers, although 1 heterotrimer is thought to be able to translocate proteins. Interacts with the ribosome. May interact with SecDF, and other proteins may be involved.

Its subcellular location is the cell membrane. In terms of biological role, essential subunit of the Sec protein translocation channel SecYEG. Clamps together the 2 halves of SecY. May contact the channel plug during translocation. The chain is Protein translocase subunit SecE from Methanococcoides burtonii (strain DSM 6242 / NBRC 107633 / OCM 468 / ACE-M).